A 53-amino-acid polypeptide reads, in one-letter code: MTKKGPLNLRLLLLLLVVLLPSCSNCALTSSQELRPSSEWRRKMITVWSKSSY.

The first 26 residues, Met1 to Cys26, serve as a signal peptide directing secretion. The short motif at Ser37 to Tyr53 is the SCOOP motif element. The SxS motif essential for MIK2 binding motif lies at Ser49–Ser51.

It belongs to the serine rich endogenous peptide (SCOOP) phytocytokine family. As to quaternary structure, interacts with MIK2 (via extracellular leucine-rich repeat domain); this interaction triggers the formation of complex between MIK2 and the BAK1/SERK3 and SERK4 coreceptors, and subsequent BAK1 activation by phosphorylation.

It is found in the cell membrane. The protein resides in the secreted. The protein localises to the extracellular space. Its subcellular location is the apoplast. In terms of biological role, brassicaceae-specific phytocytokine (plant endogenous peptide released into the apoplast) perceived by MIK2 in a BAK1/SERK3 and SERK4 coreceptors-dependent manner, that modulates various physiological and antimicrobial processes including growth prevention and reactive oxygen species (ROS) response regulation. The protein is Serine rich endogenous peptide 3 of Arabidopsis thaliana (Mouse-ear cress).